A 226-amino-acid polypeptide reads, in one-letter code: MTAPLTLLIVEDETPLAEMHAEYIRHIPGFSQILLAGNLAQARMMIERFKPGLILLDNYLPDGRGINLLHELVQAHYPGDVVFTTAASDMETVSEAVRCGVFDYLIKPIAYERLGQTLTRFRQRKHMLESIDSASQKQIDEMFNAYARGEPKDELPTGIDPLTLNAVRKLFKEPGVQHTAETVAQALTISRTTARRYLEYCASRHLIIAEIVHGKVGRPQRIYHSG.

Positions 6–122 constitute a Response regulatory domain; it reads TLLIVEDETP…RLGQTLTRFR (117 aa). D57 is modified (4-aspartylphosphate). Residues 180 to 199 constitute a DNA-binding region (H-T-H motif); sequence AETVAQALTISRTTARRYLE.

Post-translationally, phosphorylated and activated by DpiB.

The protein resides in the cytoplasm. Its function is as follows. Member of the two-component regulatory system DpiA/DpiB, which is essential for expression of citrate-specific fermentation genes and genes involved in plasmid inheritance. Could be involved in response to both the presence of citrate and external redox conditions. The sequence is that of Transcriptional regulatory protein DpiA (dpiA) from Escherichia coli O157:H7.